We begin with the raw amino-acid sequence, 394 residues long: Cell division protein FtsZ (394 aa).

Residues 21 to 25, 108 to 110, Glu-139, Arg-143, and Asp-187 contribute to the GTP site; these read GGGGN and GTG.

The protein belongs to the FtsZ family. In terms of assembly, homodimer. Polymerizes to form a dynamic ring structure in a strictly GTP-dependent manner. Interacts directly with several other division proteins. Interacts with the SulA inhibitor.

It localises to the cytoplasm. Essential cell division protein that forms a contractile ring structure (Z ring) at the future cell division site. The regulation of the ring assembly controls the timing and the location of cell division. One of the functions of the FtsZ ring is to recruit other cell division proteins to the septum to produce a new cell wall between the dividing cells. Binds GTP and shows GTPase activity. The polypeptide is Cell division protein FtsZ (Pseudomonas aeruginosa (strain ATCC 15692 / DSM 22644 / CIP 104116 / JCM 14847 / LMG 12228 / 1C / PRS 101 / PAO1)).